We begin with the raw amino-acid sequence, 565 residues long: Proline--tRNA ligase (565 aa).

The protein belongs to the class-II aminoacyl-tRNA synthetase family. ProS type 1 subfamily. Homodimer.

It is found in the cytoplasm. It carries out the reaction tRNA(Pro) + L-proline + ATP = L-prolyl-tRNA(Pro) + AMP + diphosphate. Catalyzes the attachment of proline to tRNA(Pro) in a two-step reaction: proline is first activated by ATP to form Pro-AMP and then transferred to the acceptor end of tRNA(Pro). As ProRS can inadvertently accommodate and process non-cognate amino acids such as alanine and cysteine, to avoid such errors it has two additional distinct editing activities against alanine. One activity is designated as 'pretransfer' editing and involves the tRNA(Pro)-independent hydrolysis of activated Ala-AMP. The other activity is designated 'posttransfer' editing and involves deacylation of mischarged Ala-tRNA(Pro). The misacylated Cys-tRNA(Pro) is not edited by ProRS. In Francisella tularensis subsp. novicida (strain U112), this protein is Proline--tRNA ligase.